Reading from the N-terminus, the 1085-residue chain is Ankyrin repeat and IBR domain-containing protein 1 (1085 aa).

Glycine 2 is lipidated: N-myristoyl glycine. ANK repeat units follow at residues 45–75 (QHNTPLHYAARHGMNRILGTFLFGRDGNPNK) and 145–174 (KKNTPLHYAAASGMKACVELLVKHGGDLFA). The interval 282–322 (CQRSGVQMPTPPPSGYNAWDTLPSPRTPRTTRSSVTSPDEI) is disordered. Over residues 304 to 319 (PSPRTPRTTRSSVTSP) the composition is skewed to low complexity. The interval 330–570 (DTSLCDICMC…GGYYRCTRYE (241 aa)) is TRIAD supradomain. Positions 334, 337, 352, 354, 357, 360, 379, 384, 466, 469, 474, 479, 520, and 523 each coordinate Zn(2+). The RING-type 1 zinc finger occupies 334-384 (CDICMCSISVFEDPVDMPCGHDFCRGCWEAFLNLKIQEGEAHNIFCPAYEC). Residues 402-479 (DKRYLQFDIK…LGEAHEPCDC (78 aa)) form an IBR-type zinc finger. Residues 520 to 549 (CANCKSPIQKNEGCNHMQCAKCKYDFCWIC) form an RING-type 2; atypical zinc finger. Cysteine 533 is a catalytic residue. Zn(2+) contacts are provided by cysteine 538, cysteine 541, cysteine 546, cysteine 549, histidine 556, and cysteine 566. The stretch at 576–641 (EEQSKEMTVE…RALKETEGGC (66 aa)) forms a coiled coil. At serine 738 the chain carries Phosphoserine. A disordered region spans residues 764-808 (RRRHRQQRRRGDVHSLLSNPTDLDEPSESTFDLPEGSSGRRPGAS). In terms of domain architecture, UIM spans 846 to 865 (EDDPNILLAIQLSLQESGLD). Residues serine 879 and serine 906 each carry the phosphoserine modification. 3 disordered regions span residues 884-907 (GSSLPSRLDSVPRSTESPRAALSS), 921-959 (GADSDPFSTDTLSSRPLSETRSDFCPSSSDLDSAGQDPS), and 1014-1085 (PPED…VHSV). The span at 926–959 (PFSTDTLSSRPLSETRSDFCPSSSDLDSAGQDPS) shows a compositional bias: polar residues. Residues 1018 to 1033 (SVSKDTGVHEGERAQM) are compositionally biased toward basic and acidic residues. A compositionally biased stretch (polar residues) spans 1068–1085 (ASQTPQTSSDWLEQVHSV).

This sequence belongs to the RBR family.

It carries out the reaction [E2 ubiquitin-conjugating enzyme]-S-ubiquitinyl-L-cysteine + [acceptor protein]-L-lysine = [E2 ubiquitin-conjugating enzyme]-L-cysteine + [acceptor protein]-N(6)-ubiquitinyl-L-lysine.. Might act as an E3 ubiquitin-protein ligase, or as part of E3 complex, which accepts ubiquitin from specific E2 ubiquitin-conjugating enzymes and then transfers it to substrates. The protein is Ankyrin repeat and IBR domain-containing protein 1 (Ankib1) of Mus musculus (Mouse).